Here is a 220-residue protein sequence, read N- to C-terminus: GTP cyclohydrolase 1 (220 aa).

The Zn(2+) site is built by Cys-109, His-112, and Cys-180.

Belongs to the GTP cyclohydrolase I family. Toroid-shaped homodecamer, composed of two pentamers of five dimers.

It carries out the reaction GTP + H2O = 7,8-dihydroneopterin 3'-triphosphate + formate + H(+). The protein operates within cofactor biosynthesis; 7,8-dihydroneopterin triphosphate biosynthesis; 7,8-dihydroneopterin triphosphate from GTP: step 1/1. This is GTP cyclohydrolase 1 from Yersinia enterocolitica serotype O:8 / biotype 1B (strain NCTC 13174 / 8081).